The chain runs to 295 residues: UDP-N-acetylenolpyruvoylglucosamine reductase (295 aa).

The FAD-binding PCMH-type domain occupies 24–188; the sequence is KVGGNAEIFF…LKVVFKINKG (165 aa). Arginine 168 is an active-site residue. Serine 217 serves as the catalytic Proton donor. The active site involves glutamate 287.

Belongs to the MurB family. Requires FAD as cofactor.

The protein resides in the cytoplasm. It catalyses the reaction UDP-N-acetyl-alpha-D-muramate + NADP(+) = UDP-N-acetyl-3-O-(1-carboxyvinyl)-alpha-D-glucosamine + NADPH + H(+). It functions in the pathway cell wall biogenesis; peptidoglycan biosynthesis. Cell wall formation. The polypeptide is UDP-N-acetylenolpyruvoylglucosamine reductase (Rickettsia peacockii (strain Rustic)).